Consider the following 130-residue polypeptide: Fluoride-specific ion channel FluC (130 aa).

The next 4 helical transmembrane spans lie at 3-23 (FVFLWAALGGAIGSSLRYFVG), 39-59 (GTFSVNIIGCFVIGFMGHLAV), 67-87 (FGIFFVTGVLGGFTTFSSYGL), and 102-122 (VSYALGTNILGLTGVAIGWFL). Na(+) is bound by residues G77 and T80.

This sequence belongs to the fluoride channel Fluc/FEX (TC 1.A.43) family.

It localises to the cell inner membrane. The enzyme catalyses fluoride(in) = fluoride(out). Its activity is regulated as follows. Na(+) is not transported, but it plays an essential structural role and its presence is essential for fluoride channel function. Fluoride-specific ion channel. Important for reducing fluoride concentration in the cell, thus reducing its toxicity. This Helicobacter pylori (strain ATCC 700392 / 26695) (Campylobacter pylori) protein is Fluoride-specific ion channel FluC.